A 493-amino-acid chain; its full sequence is 3-octaprenyl-4-hydroxybenzoate carboxy-lyase (493 aa).

N172 is a binding site for Mn(2+). Residues 175–177 (IYR), 189–191 (RWL), and 194–195 (RG) each bind prenylated FMN. Residue E238 coordinates Mn(2+). The active-site Proton donor is D287.

This sequence belongs to the UbiD family. As to quaternary structure, homohexamer. Prenylated FMN serves as cofactor. The cofactor is Mn(2+).

Its subcellular location is the cell membrane. The catalysed reaction is a 4-hydroxy-3-(all-trans-polyprenyl)benzoate + H(+) = a 2-(all-trans-polyprenyl)phenol + CO2. The protein operates within cofactor biosynthesis; ubiquinone biosynthesis. Catalyzes the decarboxylation of 3-octaprenyl-4-hydroxy benzoate to 2-octaprenylphenol, an intermediate step in ubiquinone biosynthesis. This Shewanella putrefaciens (strain CN-32 / ATCC BAA-453) protein is 3-octaprenyl-4-hydroxybenzoate carboxy-lyase.